We begin with the raw amino-acid sequence, 128 residues long: Fluoride-specific ion channel FluC (128 aa).

The next 4 membrane-spanning stretches (helical) occupy residues 5-25 (IVAI…LSLA), 35-55 (LGTL…AVVF), 67-87 (LFVI…SVEV), and 96-116 (FGWA…LTAL). Gly75 and Thr78 together coordinate Na(+).

This sequence belongs to the fluoride channel Fluc/FEX (TC 1.A.43) family.

It is found in the cell inner membrane. It carries out the reaction fluoride(in) = fluoride(out). Its activity is regulated as follows. Na(+) is not transported, but it plays an essential structural role and its presence is essential for fluoride channel function. In terms of biological role, fluoride-specific ion channel. Important for reducing fluoride concentration in the cell, thus reducing its toxicity. The chain is Fluoride-specific ion channel FluC from Burkholderia orbicola (strain MC0-3).